We begin with the raw amino-acid sequence, 225 residues long: Translation initiation factor 6 (225 aa).

This sequence belongs to the eIF-6 family.

Functionally, binds to the 50S ribosomal subunit and prevents its association with the 30S ribosomal subunit to form the 70S initiation complex. The polypeptide is Translation initiation factor 6 (Hyperthermus butylicus (strain DSM 5456 / JCM 9403 / PLM1-5)).